The sequence spans 361 residues: Peptide chain release factor 1 (361 aa).

Gln-238 carries the N5-methylglutamine modification.

The protein belongs to the prokaryotic/mitochondrial release factor family. Post-translationally, methylated by PrmC. Methylation increases the termination efficiency of RF1.

The protein localises to the cytoplasm. Peptide chain release factor 1 directs the termination of translation in response to the peptide chain termination codons UAG and UAA. This is Peptide chain release factor 1 from Mesomycoplasma hyopneumoniae (strain 232) (Mycoplasma hyopneumoniae).